We begin with the raw amino-acid sequence, 81 residues long: NAD(P)H-quinone oxidoreductase subunit L (81 aa).

Transmembrane regions (helical) follow at residues 13–33 (LLVIGAYGALGAAYLVVIPLF) and 51–71 (LGIYGLVFLFFPGLILFAPFL).

This sequence belongs to the complex I NdhL subunit family. NDH-1 can be composed of about 15 different subunits; different subcomplexes with different compositions have been identified which probably have different functions.

It localises to the cellular thylakoid membrane. It catalyses the reaction a plastoquinone + NADH + (n+1) H(+)(in) = a plastoquinol + NAD(+) + n H(+)(out). The enzyme catalyses a plastoquinone + NADPH + (n+1) H(+)(in) = a plastoquinol + NADP(+) + n H(+)(out). Its function is as follows. NDH-1 shuttles electrons from an unknown electron donor, via FMN and iron-sulfur (Fe-S) centers, to quinones in the respiratory and/or the photosynthetic chain. The immediate electron acceptor for the enzyme in this species is believed to be plastoquinone. Couples the redox reaction to proton translocation, and thus conserves the redox energy in a proton gradient. Cyanobacterial NDH-1 also plays a role in inorganic carbon-concentration. The polypeptide is NAD(P)H-quinone oxidoreductase subunit L (Synechococcus sp. (strain WH7803)).